Consider the following 355-residue polypeptide: Uroporphyrinogen decarboxylase (355 aa).

Substrate-binding positions include arginine 27–arginine 31, aspartate 77, tyrosine 154, threonine 209, and histidine 328.

The protein belongs to the uroporphyrinogen decarboxylase family. As to quaternary structure, homodimer.

Its subcellular location is the cytoplasm. The enzyme catalyses uroporphyrinogen III + 4 H(+) = coproporphyrinogen III + 4 CO2. It functions in the pathway porphyrin-containing compound metabolism; protoporphyrin-IX biosynthesis; coproporphyrinogen-III from 5-aminolevulinate: step 4/4. Functionally, catalyzes the decarboxylation of four acetate groups of uroporphyrinogen-III to yield coproporphyrinogen-III. In Photobacterium profundum (strain SS9), this protein is Uroporphyrinogen decarboxylase.